The primary structure comprises 238 residues: Ribosomal RNA small subunit methyltransferase G (238 aa).

Residues Gly-77, Phe-82, 128–129 (AE), and Arg-147 each bind S-adenosyl-L-methionine.

Belongs to the methyltransferase superfamily. RNA methyltransferase RsmG family.

The protein localises to the cytoplasm. Specifically methylates the N7 position of guanine in position 535 of 16S rRNA. The polypeptide is Ribosomal RNA small subunit methyltransferase G (Listeria monocytogenes serotype 4b (strain CLIP80459)).